Consider the following 87-residue polypeptide: Large ribosomal subunit protein bL31B (87 aa).

It belongs to the bacterial ribosomal protein bL31 family. Type B subfamily. As to quaternary structure, part of the 50S ribosomal subunit.

In Burkholderia ambifaria (strain MC40-6), this protein is Large ribosomal subunit protein bL31B.